A 433-amino-acid chain; its full sequence is Acetyl-CoA acetyltransferase erg10A, mitochondrial (433 aa).

The transit peptide at 1 to 34 (MAIQTTTGLAARLVAKRATFPASRRNFSASRSAL) directs the protein to the mitochondrion. The active-site Acyl-thioester intermediate is cysteine 124. K(+) is bound at residue tyrosine 219. 2 residues coordinate CoA: asparagine 229 and lysine 262. Residue alanine 280 coordinates K(+). Position 284 (serine 284) interacts with CoA. Residues histidine 387 and cysteine 415 each act as proton acceptor in the active site. Asparagine 416 provides a ligand contact to chloride.

The protein belongs to the thiolase-like superfamily. Thiolase family. In terms of assembly, homotetramer. Requires K(+) as cofactor.

Its subcellular location is the mitochondrion. It carries out the reaction 2 acetyl-CoA = acetoacetyl-CoA + CoA. Its pathway is metabolic intermediate biosynthesis; (R)-mevalonate biosynthesis; (R)-mevalonate from acetyl-CoA: step 1/3. Mitochondrial acetyl-CoA acetyltransferase that catalyzes both the formation and degradation of acetoacetyl-CoA. Has no overlapping function with erg10B and seems not to be involved in ergosterol biosynthesis. Plays an important role in growth, morphogenesis and maintaining mitochondrial function including the response to oxidative stresses. The polypeptide is Acetyl-CoA acetyltransferase erg10A, mitochondrial (Aspergillus fumigatus (strain ATCC MYA-4609 / CBS 101355 / FGSC A1100 / Af293) (Neosartorya fumigata)).